Here is a 320-residue protein sequence, read N- to C-terminus: Malate dehydrogenase (320 aa).

NAD(+) contacts are provided by residues 10 to 15 and aspartate 34; that span reads GAGNIG. Substrate contacts are provided by arginine 83 and arginine 89. Residues asparagine 96 and 119–121 contribute to the NAD(+) site; that span reads ITN. Substrate contacts are provided by asparagine 121 and arginine 152. The Proton acceptor role is filled by histidine 176.

Belongs to the LDH/MDH superfamily. MDH type 3 family.

The enzyme catalyses (S)-malate + NAD(+) = oxaloacetate + NADH + H(+). Catalyzes the reversible oxidation of malate to oxaloacetate. The chain is Malate dehydrogenase from Rhizorhabdus wittichii (strain DSM 6014 / CCUG 31198 / JCM 15750 / NBRC 105917 / EY 4224 / RW1) (Sphingomonas wittichii).